A 527-amino-acid chain; its full sequence is Arginine--tRNA ligase (527 aa).

The short motif at 108 to 118 (ANPTGPLHIGH) is the 'HIGH' region element.

Belongs to the class-I aminoacyl-tRNA synthetase family. In terms of assembly, monomer.

The protein localises to the cytoplasm. The catalysed reaction is tRNA(Arg) + L-arginine + ATP = L-arginyl-tRNA(Arg) + AMP + diphosphate. This chain is Arginine--tRNA ligase, found in Sulfurimonas denitrificans (strain ATCC 33889 / DSM 1251) (Thiomicrospira denitrificans (strain ATCC 33889 / DSM 1251)).